A 101-amino-acid chain; its full sequence is Urease subunit gamma (101 aa).

The protein belongs to the urease gamma subunit family. In terms of assembly, heterotrimer of UreA (gamma), UreB (beta) and UreC (alpha) subunits. Three heterotrimers associate to form the active enzyme.

It localises to the cytoplasm. The catalysed reaction is urea + 2 H2O + H(+) = hydrogencarbonate + 2 NH4(+). Its pathway is nitrogen metabolism; urea degradation; CO(2) and NH(3) from urea (urease route): step 1/1. This chain is Urease subunit gamma, found in Corynebacterium kroppenstedtii (strain DSM 44385 / JCM 11950 / CIP 105744 / CCUG 35717).